A 229-amino-acid chain; its full sequence is Ribose-5-phosphate isomerase A (229 aa).

Substrate is bound by residues 28–31 (TGST), 85–88 (DGAD), and 98–101 (KGRG). Catalysis depends on glutamate 107, which acts as the Proton acceptor. Lysine 125 contributes to the substrate binding site.

Belongs to the ribose 5-phosphate isomerase family. As to quaternary structure, homodimer.

The enzyme catalyses aldehydo-D-ribose 5-phosphate = D-ribulose 5-phosphate. Its pathway is carbohydrate degradation; pentose phosphate pathway; D-ribose 5-phosphate from D-ribulose 5-phosphate (non-oxidative stage): step 1/1. In terms of biological role, catalyzes the reversible conversion of ribose-5-phosphate to ribulose 5-phosphate. This chain is Ribose-5-phosphate isomerase A, found in Pyrococcus abyssi (strain GE5 / Orsay).